The chain runs to 229 residues: Biosynthetic peptidoglycan transglycosylase (229 aa).

Residues 10 to 30 (LLLALVLVVLYQFWIFMHILW) form a helical membrane-spanning segment.

Belongs to the glycosyltransferase 51 family.

The protein localises to the cell inner membrane. The enzyme catalyses [GlcNAc-(1-&gt;4)-Mur2Ac(oyl-L-Ala-gamma-D-Glu-L-Lys-D-Ala-D-Ala)](n)-di-trans,octa-cis-undecaprenyl diphosphate + beta-D-GlcNAc-(1-&gt;4)-Mur2Ac(oyl-L-Ala-gamma-D-Glu-L-Lys-D-Ala-D-Ala)-di-trans,octa-cis-undecaprenyl diphosphate = [GlcNAc-(1-&gt;4)-Mur2Ac(oyl-L-Ala-gamma-D-Glu-L-Lys-D-Ala-D-Ala)](n+1)-di-trans,octa-cis-undecaprenyl diphosphate + di-trans,octa-cis-undecaprenyl diphosphate + H(+). The protein operates within cell wall biogenesis; peptidoglycan biosynthesis. Its function is as follows. Peptidoglycan polymerase that catalyzes glycan chain elongation from lipid-linked precursors. In Methylobacillus flagellatus (strain ATCC 51484 / DSM 6875 / VKM B-1610 / KT), this protein is Biosynthetic peptidoglycan transglycosylase.